Here is a 615-residue protein sequence, read N- to C-terminus: ATP-dependent zinc metalloprotease FtsH (615 aa).

Topologically, residues 1 to 8 (MAMNKDKP) are cytoplasmic. The helical transmembrane segment at 9-29 (WTLYLLAVGLAVLAAVQFGLF) threads the bilayer. Topologically, residues 30–104 (SQPAVQAIPY…FSGVVEDNTV (75 aa)) are periplasmic. Residues 105–125 (ATVMGALMPLLMLLALWYFLF) traverse the membrane as a helical segment. The Cytoplasmic portion of the chain corresponds to 126-615 (HGLGQKQGLG…ATYVLVDATK (490 aa)). ATP is bound at residue 198–205 (GPPGTGKT). Position 420 (His-420) interacts with Zn(2+). Residue Glu-421 is part of the active site. Residues His-424 and Asp-497 each coordinate Zn(2+).

In the central section; belongs to the AAA ATPase family. This sequence in the C-terminal section; belongs to the peptidase M41 family. Homohexamer. Requires Zn(2+) as cofactor.

The protein localises to the cell inner membrane. Its function is as follows. Acts as a processive, ATP-dependent zinc metallopeptidase for both cytoplasmic and membrane proteins. Plays a role in the quality control of integral membrane proteins. In Pseudomonas putida (strain ATCC 700007 / DSM 6899 / JCM 31910 / BCRC 17059 / LMG 24140 / F1), this protein is ATP-dependent zinc metalloprotease FtsH.